We begin with the raw amino-acid sequence, 138 residues long: Putative pre-16S rRNA nuclease (138 aa).

This sequence belongs to the YqgF nuclease family.

The protein localises to the cytoplasm. Functionally, could be a nuclease involved in processing of the 5'-end of pre-16S rRNA. The polypeptide is Putative pre-16S rRNA nuclease (Geobacillus kaustophilus (strain HTA426)).